Reading from the N-terminus, the 295-residue chain is Mediator of RNA polymerase II transcription subunit 27 (295 aa).

This sequence belongs to the Mediator complex subunit 27 family. Component of the Mediator complex.

The protein localises to the nucleus. Component of the Mediator complex, a coactivator involved in the regulated transcription of nearly all RNA polymerase II-dependent genes. Mediator functions as a bridge to convey information from gene-specific regulatory proteins to the basal RNA polymerase II transcription machinery. Mediator is recruited to promoters by direct interactions with regulatory proteins and serves as a scaffold for the assembly of a functional preinitiation complex with RNA polymerase II and the general transcription factors. This is Mediator of RNA polymerase II transcription subunit 27 (MED27) from Aedes aegypti (Yellowfever mosquito).